Reading from the N-terminus, the 142-residue chain is MRALLGICVLALVTPAVLGRTMDRCSLAREMANMGVSRDQLSKWACIAEHESSYRTGVVGPPNTDGSNDYGIFQINDMYWCQPSSGKFSHNGCDVSCNALLTDDIKSSVRCALKVLGQQGWSAWSTWHYCSGYLPPIDDCFV.

The N-terminal stretch at 1 to 19 is a signal peptide; sequence MRALLGICVLALVTPAVLG. The 123-residue stretch at 20–142 folds into the C-type lysozyme domain; sequence RTMDRCSLAR…YLPPIDDCFV (123 aa). Cystine bridges form between Cys-25-Cys-140, Cys-46-Cys-130, Cys-81-Cys-97, and Cys-93-Cys-111. Residues Glu-51 and Asp-69 contribute to the active site.

Belongs to the glycosyl hydrolase 22 family. As to expression, found in the midgut.

It carries out the reaction Hydrolysis of (1-&gt;4)-beta-linkages between N-acetylmuramic acid and N-acetyl-D-glucosamine residues in a peptidoglycan and between N-acetyl-D-glucosamine residues in chitodextrins.. Its function is as follows. Unlikely to play an active role in the humoral immune defense. May have a function in the digestion of bacteria in the food. May be involved in the clearance of bacteria from the larval gut before metamorphosis. This chain is Lysozyme X (LysX), found in Drosophila melanogaster (Fruit fly).